Consider the following 1593-residue polypeptide: THO complex subunit 2 (1593 aa).

The tract at residues 1-163 is anchor domain; interaction with THOC5 and THOC7; sequence MAAAAVVVPA…KLFYKQQKFN (163 aa). The bow domain; interaction with THOC1 dock domain and THOC3 stretch occupies residues 164 to 534; sequence LLREENEGYA…GQWKNETYNS (371 aa). Residues 322 to 341 form a disordered region; it reads KMDEREKEKEKEEEKVEKPP. The tract at residues 535–686 is MIF4G domain; interaction with THOC3 and DDX39B; that stretch reads HPLLVKVKAQ…LILKEVVQKM (152 aa). A stern domain region spans residues 687–1174; the sequence is AGIEITEEMT…LAMGYSGQLK (488 aa). Residues 896–965 are a coiled coil; that stretch reads HTSYEREVNK…LKLEKDNWLL (70 aa). Residues 923–928 carry the Nuclear localization signal motif; the sequence is KKKKEK. A charged domain region spans residues 1175–1593; it reads SRKSYMIPEN…KHHKSSDKHR (419 aa). The segment at 1184 to 1593 is disordered; it reads NEFHHKDPPP…KHHKSSDKHR (410 aa). Residues 1218-1234 are compositionally biased toward basic and acidic residues; the sequence is KSDESSTEETDKSRERS. Ser1222 carries the post-translational modification Phosphoserine. Low complexity predominate over residues 1251–1263; that stretch reads GNSSNGNSGSNSN. 3 stretches are compositionally biased toward basic and acidic residues: residues 1265–1285, 1294–1343, and 1353–1383; these read AVKE…KEKT, VLGK…EKFK, and STQE…KGGE. Thr1385 carries the phosphothreonine modification. Phosphoserine is present on residues Ser1390, Ser1393, and Ser1417. Polar residues predominate over residues 1416–1425; the sequence is PSPSHSSTVK. At Thr1443 the chain carries Phosphothreonine. Over residues 1449–1504 the composition is skewed to basic and acidic residues; that stretch reads KSKEREMDKKDLDKSRERSREREKKDEKDRKERKRDHSNNDREVPPDLTKRRKEEN. Ser1450, Ser1486, and Ser1516 each carry phosphoserine. Positions 1524-1582 are enriched in basic and acidic residues; that stretch reads NEKDKEKNKSKSSGKEKGSDSFKSEKMDKISSGGKKESRHDKEKIEKKEKRDSSGGKEE. Residues 1583–1593 show a composition bias toward basic residues; that stretch reads KKHHKSSDKHR.

Belongs to the THOC2 family. Component of the THO subcomplex, which is composed of THOC1, THOC2, THOC3, THOC5, THOC6 and THOC7. The THO subcomplex interacts with DDX39B to form the THO-DDX39B complex which multimerizes into a 28-subunit tetrameric assembly. Component of the transcription/export (TREX) complex at least composed of ALYREF/THOC4, DDX39B, SARNP/CIP29, CHTOP and the THO subcomplex; in the complex interacts with THOC1, THOC3, THOC5, THOC7 and DDX39B. TREX seems to have a dynamic structure involving ATP-dependent remodeling. Interacts with POLDIP3 and ZC3H11A. As to expression, expressed in the hippocampus and the cerebral cortex.

Its subcellular location is the nucleus. It localises to the nucleus speckle. The protein resides in the cytoplasm. In terms of biological role, component of the THO subcomplex of the TREX complex which is thought to couple mRNA transcription, processing and nuclear export, and which specifically associates with spliced mRNA and not with unspliced pre-mRNA. Required for efficient export of polyadenylated RNA and spliced mRNA. The THOC1-THOC2-THOC3 core complex alone is sufficient to bind export factor NXF1-NXT1 and promote ATPase activity of DDX39B; in the complex THOC2 is the only component that directly interacts with DDX39B. TREX is recruited to spliced mRNAs by a transcription-independent mechanism, binds to mRNA upstream of the exon-junction complex (EJC) and is recruited in a splicing- and cap-dependent manner to a region near the 5' end of the mRNA where it functions in mRNA export to the cytoplasm via the TAP/NXF1 pathway. Required for NXF1 localization to the nuclear rim. THOC2 (and probably the THO complex) is involved in releasing mRNA from nuclear speckle domains. Functionally, (Microbial infection) The TREX complex is essential for the export of Kaposi's sarcoma-associated herpesvirus (KSHV) intronless mRNAs and infectious virus production. The protein is THO complex subunit 2 (THOC2) of Homo sapiens (Human).